The sequence spans 199 residues: MNYYSASISQLIEEFTKLPGIGRKTAQRLAFHVINMPIQDAHNLADAIVKAKENIKYCKVCTNLTDQEVCNICSDERRDPLLICVVEDPRDVVAMERTKEFKGYYHVLHGAISPLEGIGPEDIKIKELLVRLSAQSADEVIIATNPNIEGEATAMYLSKLLKPMGIKVSRIAHGIPVGGDLEYADEVTLTKALEGRREI.

The C4-type zinc-finger motif lies at 58-73 (CKVCTNLTDQEVCNIC). One can recognise a Toprim domain in the interval 81–176 (LLICVVEDPR…KVSRIAHGIP (96 aa)).

The protein belongs to the RecR family.

May play a role in DNA repair. It seems to be involved in an RecBC-independent recombinational process of DNA repair. It may act with RecF and RecO. In Alkaliphilus oremlandii (strain OhILAs) (Clostridium oremlandii (strain OhILAs)), this protein is Recombination protein RecR.